Reading from the N-terminus, the 342-residue chain is Methylthioribose-1-phosphate isomerase (342 aa).

Substrate contacts are provided by residues R49–A51, R86, and Q187. The active-site Proton donor is D228. Position 238 to 239 (N238 to K239) interacts with substrate.

The protein belongs to the eIF-2B alpha/beta/delta subunits family. MtnA subfamily.

It catalyses the reaction 5-(methylsulfanyl)-alpha-D-ribose 1-phosphate = 5-(methylsulfanyl)-D-ribulose 1-phosphate. It participates in amino-acid biosynthesis; L-methionine biosynthesis via salvage pathway; L-methionine from S-methyl-5-thio-alpha-D-ribose 1-phosphate: step 1/6. Its function is as follows. Catalyzes the interconversion of methylthioribose-1-phosphate (MTR-1-P) into methylthioribulose-1-phosphate (MTRu-1-P). The protein is Methylthioribose-1-phosphate isomerase of Klebsiella pneumoniae (strain 342).